The sequence spans 276 residues: Putative metal-binding protein TC_0696 (276 aa).

The N-terminal stretch at 1-18 (MRLLILLLFSFGIIYSHG) is a signal peptide. Histidine 59, histidine 121, histidine 185, and aspartate 256 together coordinate a divalent metal cation.

The protein belongs to the bacterial solute-binding protein 9 family.

It is found in the periplasm. Part of an ATP-binding cassette (ABC) transport system involved in metal import. Binds a metal with high affinity and specificity and delivers it to the membrane permease for translocation into the cytoplasm. The polypeptide is Putative metal-binding protein TC_0696 (Chlamydia muridarum (strain MoPn / Nigg)).